We begin with the raw amino-acid sequence, 789 residues long: Transducer protein Htr6 (789 aa).

The next 2 membrane-spanning stretches (helical) occupy residues 29–49 (FAVAFIVVLVVIAGAGVFAFQ) and 294–314 (TVTVLVVLAVISLAIVGIALG). HAMP domains follow at residues 315–367 (RHTV…DRIQ) and 409–462 (ERLQ…ATIA). The region spanning 481–717 (GAEEIETTSQ…SVVRRVDDVA (237 aa)) is the Methyl-accepting transducer domain. A disordered region spans residues 763–789 (NQFETRADADEPDADTTVDASADDTGD). Positions 772 to 789 (DEPDADTTVDASADDTGD) are enriched in acidic residues.

This sequence belongs to the methyl-accepting chemotaxis (MCP) protein family. Post-translationally, methylated by CheR.

It is found in the cell membrane. Potentially involved in chemo- or phototactic signal transduction. In Halobacterium salinarum (strain ATCC 29341 / DSM 671 / R1), this protein is Transducer protein Htr6 (htr6).